Reading from the N-terminus, the 95-residue chain is Aspartyl/glutamyl-tRNA(Asn/Gln) amidotransferase subunit C (95 aa).

It belongs to the GatC family. In terms of assembly, heterotrimer of A, B and C subunits.

The catalysed reaction is L-glutamyl-tRNA(Gln) + L-glutamine + ATP + H2O = L-glutaminyl-tRNA(Gln) + L-glutamate + ADP + phosphate + H(+). It catalyses the reaction L-aspartyl-tRNA(Asn) + L-glutamine + ATP + H2O = L-asparaginyl-tRNA(Asn) + L-glutamate + ADP + phosphate + 2 H(+). Its function is as follows. Allows the formation of correctly charged Asn-tRNA(Asn) or Gln-tRNA(Gln) through the transamidation of misacylated Asp-tRNA(Asn) or Glu-tRNA(Gln) in organisms which lack either or both of asparaginyl-tRNA or glutaminyl-tRNA synthetases. The reaction takes place in the presence of glutamine and ATP through an activated phospho-Asp-tRNA(Asn) or phospho-Glu-tRNA(Gln). This is Aspartyl/glutamyl-tRNA(Asn/Gln) amidotransferase subunit C from Brucella abortus (strain S19).